A 426-amino-acid chain; its full sequence is 3-phosphoshikimate 1-carboxyvinyltransferase (426 aa).

Residues K23, S24, and R28 each contribute to the 3-phosphoshikimate site. Phosphoenolpyruvate is bound at residue K23. Phosphoenolpyruvate is bound by residues G96 and R124. The 3-phosphoshikimate site is built by T170, S171, Q172, S198, D314, and K341. Q172 is a phosphoenolpyruvate binding site. Catalysis depends on D314, which acts as the Proton acceptor. Residues R345, R386, and K411 each contribute to the phosphoenolpyruvate site.

This sequence belongs to the EPSP synthase family. In terms of assembly, monomer.

The protein resides in the cytoplasm. The enzyme catalyses 3-phosphoshikimate + phosphoenolpyruvate = 5-O-(1-carboxyvinyl)-3-phosphoshikimate + phosphate. The protein operates within metabolic intermediate biosynthesis; chorismate biosynthesis; chorismate from D-erythrose 4-phosphate and phosphoenolpyruvate: step 6/7. Catalyzes the transfer of the enolpyruvyl moiety of phosphoenolpyruvate (PEP) to the 5-hydroxyl of shikimate-3-phosphate (S3P) to produce enolpyruvyl shikimate-3-phosphate and inorganic phosphate. The chain is 3-phosphoshikimate 1-carboxyvinyltransferase from Trichormus variabilis (strain ATCC 29413 / PCC 7937) (Anabaena variabilis).